The chain runs to 409 residues: Protein naked cuticle homolog 2 (409 aa).

G2 is lipidated: N-myristoyl glycine. The region spanning 109 to 144 (AEDNRQEWVFTLYDFDNSGKVTKEDMSSLMHTIYDV) is the EF-hand domain. 5 residues coordinate Ca(2+): D122, D124, S126, K128, and D133. Disordered stretches follow at residues 160–224 (LRVK…YCVD), 243–315 (TSRF…RYPG), 346–366 (SHTH…RIRS), and 388–409 (RHEH…YHQT). 2 stretches are compositionally biased toward basic and acidic residues: residues 171–185 (AARR…RETS) and 193–224 (VRSE…YCVD). Residues 247 to 268 (DSSSPDADQDPPSRSSHSQSRP) show a composition bias toward low complexity. Positions 389–409 (HEHHHHHEHHHHHHYHHYHQT) are enriched in basic residues.

This sequence belongs to the NKD family. As to expression, expressed ubiquitously until 1 dpf, when expression becomes confined to the anterior CNS, with slight expression in the developing tail.

The protein localises to the cell membrane. It localises to the cytoplasm. In terms of biological role, cell autonomous antagonist of both the canonical and non-canonical Wnt signaling pathways. The polypeptide is Protein naked cuticle homolog 2 (nkd2) (Danio rerio (Zebrafish)).